The chain runs to 102 residues: Small ribosomal subunit protein uS10 (102 aa).

Belongs to the universal ribosomal protein uS10 family. Part of the 30S ribosomal subunit.

Involved in the binding of tRNA to the ribosomes. The chain is Small ribosomal subunit protein uS10 from Thermococcus gammatolerans (strain DSM 15229 / JCM 11827 / EJ3).